The following is a 374-amino-acid chain: Queuine tRNA-ribosyltransferase (374 aa).

Catalysis depends on aspartate 89, which acts as the Proton acceptor. Substrate contacts are provided by residues 89-93 (DSGGF), aspartate 143, glutamine 185, and glycine 212. The interval 243 to 249 (GVGKPED) is RNA binding. The active-site Nucleophile is aspartate 262. Residues 267 to 271 (TRNAR) are RNA binding; important for wobble base 34 recognition. Zn(2+)-binding residues include cysteine 300, cysteine 302, cysteine 305, and histidine 331.

Belongs to the queuine tRNA-ribosyltransferase family. As to quaternary structure, homodimer. Within each dimer, one monomer is responsible for RNA recognition and catalysis, while the other monomer binds to the replacement base PreQ1. Zn(2+) is required as a cofactor.

It carries out the reaction 7-aminomethyl-7-carbaguanine + guanosine(34) in tRNA = 7-aminomethyl-7-carbaguanosine(34) in tRNA + guanine. It participates in tRNA modification; tRNA-queuosine biosynthesis. Catalyzes the base-exchange of a guanine (G) residue with the queuine precursor 7-aminomethyl-7-deazaguanine (PreQ1) at position 34 (anticodon wobble position) in tRNAs with GU(N) anticodons (tRNA-Asp, -Asn, -His and -Tyr). Catalysis occurs through a double-displacement mechanism. The nucleophile active site attacks the C1' of nucleotide 34 to detach the guanine base from the RNA, forming a covalent enzyme-RNA intermediate. The proton acceptor active site deprotonates the incoming PreQ1, allowing a nucleophilic attack on the C1' of the ribose to form the product. After dissociation, two additional enzymatic reactions on the tRNA convert PreQ1 to queuine (Q), resulting in the hypermodified nucleoside queuosine (7-(((4,5-cis-dihydroxy-2-cyclopenten-1-yl)amino)methyl)-7-deazaguanosine). The chain is Queuine tRNA-ribosyltransferase from Saccharophagus degradans (strain 2-40 / ATCC 43961 / DSM 17024).